The sequence spans 646 residues: Type I inositol polyphosphate 5-phosphatase 2 (646 aa).

Residues 59–74 (TDEDSHNGRRGSEADH) are compositionally biased toward basic and acidic residues. Disordered regions lie at residues 59–99 (TDED…GKSE), 185–207 (ESVY…SAPS), and 329–369 (IDNR…IRNS). The span at 188–207 (YDQSPSCNNNALHRSHSAPS) shows a compositional bias: polar residues. Basic and acidic residues predominate over residues 341–350 (EAAKIMHDDS). Catalytic regions lie at residues 495 to 510 (DQVF…LNMS) and 575 to 590 (KKRA…WLGK).

The protein belongs to the inositol polyphosphate 5-phosphatase family. Expressed ubiquitously.

The catalysed reaction is 1D-myo-inositol 1,4,5-trisphosphate + H2O = 1D-myo-inositol 1,4-bisphosphate + phosphate. The enzyme catalyses 1D-myo-inositol 1,3,4,5-tetrakisphosphate + H2O = 1D-myo-inositol 1,3,4-trisphosphate + phosphate. Functionally, has phosphatase activity toward Ins(1,4,5)P3 and Ins(1,3,4,5)P4. Seems to be involved in the abscisic acid (ABA) signaling pathway. Could also be able to hydrolyze PtdIns(4,5)P2 and PtdIns(3,4,5)P3. This Arabidopsis thaliana (Mouse-ear cress) protein is Type I inositol polyphosphate 5-phosphatase 2.